The following is a 62-amino-acid chain: Photosystem II reaction center protein Z (62 aa).

2 helical membrane passes run 8-28 (AVFA…VVFA) and 41-61 (FSGT…NSLI).

The protein belongs to the PsbZ family. As to quaternary structure, PSII is composed of 1 copy each of membrane proteins PsbA, PsbB, PsbC, PsbD, PsbE, PsbF, PsbH, PsbI, PsbJ, PsbK, PsbL, PsbM, PsbT, PsbY, PsbZ, Psb30/Ycf12, at least 3 peripheral proteins of the oxygen-evolving complex and a large number of cofactors. It forms dimeric complexes.

It localises to the plastid. The protein localises to the chloroplast thylakoid membrane. In terms of biological role, may control the interaction of photosystem II (PSII) cores with the light-harvesting antenna, regulates electron flow through the 2 photosystem reaction centers. PSII is a light-driven water plastoquinone oxidoreductase, using light energy to abstract electrons from H(2)O, generating a proton gradient subsequently used for ATP formation. This Phalaenopsis aphrodite subsp. formosana (Moth orchid) protein is Photosystem II reaction center protein Z.